Reading from the N-terminus, the 573-residue chain is Splicing factor U2af large subunit B (573 aa).

Residues 1-12 show a composition bias toward acidic residues; it reads MPDYEGNGEDID. The disordered stretch occupies residues 1-187; sequence MPDYEGNGED…DMAPPTSAML (187 aa). The segment covering 38–145 has biased composition (basic and acidic residues); sequence SDSKSQHSSR…QREHAKDRES (108 aa). The span at 161–173 shows a compositional bias: basic residues; the sequence is SRSRSRSRSKSKR. 3 consecutive RRM domains span residues 239 to 322, 359 to 437, and 478 to 564; these read RRVY…RPSD, DRIF…RANQ, and EVIS…YPEN.

Belongs to the splicing factor SR family. Expressed in stems, leaves and apical buds.

The protein resides in the nucleus. Functionally, necessary for the splicing of pre-mRNA. Binds to the U -enriched regions of plant introns. The protein is Splicing factor U2af large subunit B (U2AF65B) of Nicotiana plumbaginifolia (Leadwort-leaved tobacco).